A 389-amino-acid polypeptide reads, in one-letter code: LL-diaminopimelate aminotransferase (389 aa).

2 residues coordinate substrate: tyrosine 13 and glycine 38. Pyridoxal 5'-phosphate-binding positions include tyrosine 67, 101 to 102 (SK), tyrosine 126, asparagine 176, tyrosine 207, and 235 to 237 (SLS). 3 residues coordinate substrate: lysine 102, tyrosine 126, and asparagine 176. Lysine 238 is subject to N6-(pyridoxal phosphate)lysine. Residue arginine 246 participates in pyridoxal 5'-phosphate binding. Residue arginine 364 participates in substrate binding.

It belongs to the class-I pyridoxal-phosphate-dependent aminotransferase family. LL-diaminopimelate aminotransferase subfamily. As to quaternary structure, homodimer. It depends on pyridoxal 5'-phosphate as a cofactor.

The catalysed reaction is (2S,6S)-2,6-diaminopimelate + 2-oxoglutarate = (S)-2,3,4,5-tetrahydrodipicolinate + L-glutamate + H2O + H(+). It functions in the pathway amino-acid biosynthesis; L-lysine biosynthesis via DAP pathway; LL-2,6-diaminopimelate from (S)-tetrahydrodipicolinate (aminotransferase route): step 1/1. Involved in the synthesis of meso-diaminopimelate (m-DAP or DL-DAP), required for both lysine and peptidoglycan biosynthesis. Catalyzes the direct conversion of tetrahydrodipicolinate to LL-diaminopimelate. In Halothermothrix orenii (strain H 168 / OCM 544 / DSM 9562), this protein is LL-diaminopimelate aminotransferase.